Reading from the N-terminus, the 540-residue chain is Cytochrome P450 monooxygenase ptmG (540 aa).

An N-linked (GlcNAc...) asparagine glycan is attached at N17. 2 helical membrane-spanning segments follow: residues 20-40 and 325-345; these read VMTL…YICI and AAFL…FLLL. C474 provides a ligand contact to heme.

This sequence belongs to the cytochrome P450 family. Requires heme as cofactor.

It localises to the membrane. It functions in the pathway secondary metabolite biosynthesis. In terms of biological role, cytochrome P450 monooxygenase; part of the gene cluster that mediates the biosynthesis of the indole diterpenes penitrems. The geranylgeranyl diphosphate (GGPP) synthase ptmG catalyzes the first step in penitrem biosynthesis via conversion of farnesyl pyrophosphate and isopentyl pyrophosphate into geranylgeranyl pyrophosphate (GGPP). Condensation of indole-3-glycerol phosphate with GGPP by the prenyl transferase ptmC then forms 3-geranylgeranylindole (3-GGI). Epoxidation by the FAD-dependent monooxygenase ptmM leads to a epoxidized-GGI that is substrate of the terpene cyclase ptmB for cyclization to yield paspaline. Paspaline is subsequently converted to 13-desoxypaxilline by the cytochrome P450 monooxygenase ptmP, the latter being then converted to paxilline by the cytochrome P450 monooxygenase ptmQ. Paxilline is converted to beta-paxitriol via C-10 ketoreduction by the short-chain dehydrogenase ptmH which can be monoprenylated at the C-20 by the indole diterpene prenyltransferase ptmD. A two-step elimination (acetylation and elimination) process performed by the O-acetyltransferase ptmV and ptmI leads to the production of the prenylated form of penijanthine. The FAD-linked oxidoreductase ptmO then converts the prenylated form of penijanthine into PC-M5 which is in turn transformed into PC-M4 by the aromatic dimethylallyltransferase ptmE. Five sequential oxidative transformations performed by the cytochrome P450 monooxygenases ptmK, ptmU, ptmL, ptmN and ptmJ yield the various penitrem compounds. PtmK, ptmU and ptmM are involved in the formation of the key bicyclic ring of penitrem C via the formation of the intermediates secopenitrem D and penitrem D. PtmL catalyzes the epoxidation of penitrem D and C to yield penitrem B and F, respectively. PtmJ catalyzes the last benzylic hydroxylation to convert penitrem B to prenitrem E and penitrem F to penitrem A. The polypeptide is Cytochrome P450 monooxygenase ptmG (Penicillium ochrochloron).